The following is a 102-amino-acid chain: U3-aranetoxin-Ce1a (102 aa).

Residues 1–21 (MKHLSIFFVFFCCICVMLCDA) form the signal peptide.

This sequence belongs to the neurotoxin 20 family. Expressed by the venom gland.

The protein localises to the secreted. The polypeptide is U3-aranetoxin-Ce1a (Caerostris extrusa (Bark spider)).